The chain runs to 383 residues: MPYVDRQNRICGFLDIEENENSGKFLRRYFILDTREDSFVWYMDNPQNLPSGSSRVGAIKLTYISKVSDATKLRPKAEFCFVMNAGMRKYFLQANDQQDLVEWVNVLNKAIKITVPKQSDSQPASDSLSRQGDCGKKQVSYRTDIVGGVPIITPTQKEEVNECGESLDRNNLKRSQSHLPYFAPKPPSDSAVIKAGYCVKQGAVMKNWKRRYFQLDENTIGYFKSELEKEPLRVIPLKEVHKVQECKQSDIMMRDNLFEIVTTSRTFYVQADSPEEMHSWIKAVSGAIVAQRGPGRSSSSMRQARRLSNPCIQRSIPAGLQNPNSLSVLPGPQPPPHIPQPLAATLWSQAVPWRSEEFTNLLPRSSQGTSRSRLSLQESQLPK.

PH domains follow at residues 7–112 and 191–289; these read QNRI…KAIK and AVIK…GAIV. The residue at position 284 (Val284) is a Phosphoserine. The segment at 362-383 is disordered; it reads LPRSSQGTSRSRLSLQESQLPK. The segment covering 370 to 383 has biased composition (low complexity); that stretch reads SRSRLSLQESQLPK.

Interacts with MPDZ and PTPN13.

The protein resides in the cytoplasm. Its subcellular location is the cell membrane. The protein localises to the nucleus. Binds specifically to phosphatidylinositol 3,4-diphosphate (PtdIns3,4P2), but not to other phosphoinositides. May recruit other proteins to the plasma membrane. This is Pleckstrin homology domain-containing family A member 1 (Plekha1) from Mus musculus (Mouse).